The chain runs to 235 residues: MSVISMKQLLEAGVHFGHQTRRWNPKMKKYIFTERNGIYIIDLQKTVKKVEEAYNFVKELAADGGKILFVGTKKQAQDSVKEEAERSGMFYVNQRWLGGTLTNFATIQKRIKRLKEIERMAEDGTFDVLPKKEVVKLKKELERLEKFLGGIKEMKELPDALFVIDPRKERIAVAEARKLNIPIIGIVDTNCDPDEIDYVIPANDDAIRAVKLLTSKIADAILEAKQGEEAVVTAE.

This sequence belongs to the universal ribosomal protein uS2 family.

In Anoxybacillus flavithermus (strain DSM 21510 / WK1), this protein is Small ribosomal subunit protein uS2.